The sequence spans 348 residues: Phosphate acyltransferase (348 aa).

The protein belongs to the PlsX family. As to quaternary structure, homodimer. Probably interacts with PlsY.

The protein localises to the cytoplasm. It catalyses the reaction a fatty acyl-[ACP] + phosphate = an acyl phosphate + holo-[ACP]. It functions in the pathway lipid metabolism; phospholipid metabolism. Catalyzes the reversible formation of acyl-phosphate (acyl-PO(4)) from acyl-[acyl-carrier-protein] (acyl-ACP). This enzyme utilizes acyl-ACP as fatty acyl donor, but not acyl-CoA. The chain is Phosphate acyltransferase from Francisella tularensis subsp. tularensis (strain FSC 198).